The following is a 334-amino-acid chain: Fructose-1,6-bisphosphatase class 1 (334 aa).

Positions 91, 113, 115, and 116 each coordinate Mg(2+). Substrate-binding positions include 116-119, Asn-208, and Lys-274; that span reads DGSS. Glu-280 provides a ligand contact to Mg(2+).

It belongs to the FBPase class 1 family. Homotetramer. It depends on Mg(2+) as a cofactor.

Its subcellular location is the cytoplasm. It carries out the reaction beta-D-fructose 1,6-bisphosphate + H2O = beta-D-fructose 6-phosphate + phosphate. Its pathway is carbohydrate biosynthesis; gluconeogenesis. The polypeptide is Fructose-1,6-bisphosphatase class 1 (Janthinobacterium sp. (strain Marseille) (Minibacterium massiliensis)).